A 375-amino-acid polypeptide reads, in one-letter code: tRNA-specific 2-thiouridylase MnmA (375 aa).

ATP is bound by residues 9-16 (AMSGGVDS) and leucine 35. Cysteine 105 acts as the Nucleophile in catalysis. Cysteine 105 and cysteine 201 are oxidised to a cystine. Glycine 129 lines the ATP pocket. The interval 151–153 (KNQ) is interaction with tRNA. The active-site Cysteine persulfide intermediate is cysteine 201. Residues 307–308 (RY) form an interaction with tRNA region.

The protein belongs to the MnmA/TRMU family.

It is found in the cytoplasm. It carries out the reaction S-sulfanyl-L-cysteinyl-[protein] + uridine(34) in tRNA + AH2 + ATP = 2-thiouridine(34) in tRNA + L-cysteinyl-[protein] + A + AMP + diphosphate + H(+). In terms of biological role, catalyzes the 2-thiolation of uridine at the wobble position (U34) of tRNA, leading to the formation of s(2)U34. The protein is tRNA-specific 2-thiouridylase MnmA of Leptospira interrogans serogroup Icterohaemorrhagiae serovar Lai (strain 56601).